The chain runs to 482 residues: Adenylosuccinate lyase (482 aa).

Substrate is bound by residues Arg-14–Tyr-15, Arg-82–Asp-84, and Thr-108–Ser-109. His-156 functions as the Proton donor/acceptor in the catalytic mechanism. A Glycyl lysine isopeptide (Lys-Gly) (interchain with G-Cter in ubiquitin) cross-link involves residue Lys-196. Substrate is bound at residue Gln-238. The active-site Proton donor/acceptor is Ser-286. Positions 300, 326, 331, and 335 each coordinate substrate.

This sequence belongs to the lyase 1 family. Adenylosuccinate lyase subfamily. In terms of assembly, homotetramer. Residues from neighboring subunits contribute catalytic and substrate-binding residues to each active site.

The catalysed reaction is N(6)-(1,2-dicarboxyethyl)-AMP = fumarate + AMP. It catalyses the reaction (2S)-2-[5-amino-1-(5-phospho-beta-D-ribosyl)imidazole-4-carboxamido]succinate = 5-amino-1-(5-phospho-beta-D-ribosyl)imidazole-4-carboxamide + fumarate. Its pathway is purine metabolism; AMP biosynthesis via de novo pathway; AMP from IMP: step 2/2. It functions in the pathway purine metabolism; IMP biosynthesis via de novo pathway; 5-amino-1-(5-phospho-D-ribosyl)imidazole-4-carboxamide from 5-amino-1-(5-phospho-D-ribosyl)imidazole-4-carboxylate: step 2/2. In Saccharomyces cerevisiae (strain ATCC 204508 / S288c) (Baker's yeast), this protein is Adenylosuccinate lyase (ADE13).